Consider the following 799-residue polypeptide: MIRLSKRSVSTLLRSGNQSFRIAAAASTSRSSPSATDVKRSDTESRWYSSLTNGQSKNSGSFAQLNMKTNWFMGYRNESSAAASDSSSQAPPPAEKFEYQAEVSRLMDLIVNSLYSNKEVFLRELISNASDALDKLRYLSVTNPELSKDAPDLDIRIYADKENGIITLTDSGIGMTRQELVDCLGTIAQSGTAKFMKALKDSKDAGGDNNLIGQFGVGFYSAFLVADRVIVSTKSPKSDKQYVWEGEANSSSFTIQEDTDPQSLIPRGTRITLHLKQEAKNFADPERIQKLVKNYSQFVSFPIYTWQEKGYTKEVEVEDDPTETKKDDQDDQTEKKKKTKKVVERYWDWELTNETQPIWLRNPKEVTTAEYNEFYRKAFNEYLDPLASSHFTTEGEVEFRSILYVPPVSPSGKDDIVNQKTKNIRLYVKRVFISDDFDGELFPRYLSFVKGVVDSHDLPLNVSREILQESRIVRIMKKRLVRKAFDMILGISLSENREDYEKFWDNFGKHLKLGCIEDRENHKRIAPLLRFFSSQSENDMISLDEYVENMKPEQKAIYFIASDSITSAKNAPFLEKMLEKGLEVLYLVEPIDEVAVQSLKAYKEKDFVDISKEDLDLGDKNEEKEAAVKKEFGQTCDWIKKRLGDKVASVQISNRLSSSPCVLVSGKFGWSANMERLMKAQSTGDTISLDYMKGRRVFEINPDHSIIKNINAAYNSNPNDEDAMRAIDLMYDAALVSSGFTPDNPAELGGKIYEMMDVALSGKWSSPEVQPQQQQMAHSHDAETFEAEVVEPVEVDGKK.

The N-terminal 48 residues, 1–48, are a transit peptide targeting the mitochondrion; that stretch reads MIRLSKRSVSTLLRSGNQSFRIAAAASTSRSSPSATDVKRSDTESRWY. Residues 23-35 show a composition bias toward low complexity; that stretch reads AAAASTSRSSPSA. The interval 23–61 is disordered; sequence AAAASTSRSSPSATDVKRSDTESRWYSSLTNGQSKNSGS. The segment covering 46–61 has biased composition (polar residues); it reads RWYSSLTNGQSKNSGS. Residues Glu124, Asn128, Asp170, Met175, 190–191, 214–219, and Thr269 each bind ATP; these read SG and QFGVGF. Residues 314–337 are disordered; sequence EVEVEDDPTETKKDDQDDQTEKKK. Over residues 322–334 the composition is skewed to basic and acidic residues; sequence TETKKDDQDDQTE. Arg464 contributes to the ATP binding site. Polar residues predominate over residues 766–777; that stretch reads SPEVQPQQQQMA. A disordered region spans residues 766–799; it reads SPEVQPQQQQMAHSHDAETFEAEVVEPVEVDGKK. Residues 784–799 are compositionally biased toward acidic residues; it reads TFEAEVVEPVEVDGKK.

This sequence belongs to the heat shock protein 90 family. As to quaternary structure, interacts with P23-1.

Its subcellular location is the mitochondrion. Molecular chaperone which stabilizes unfolding protein intermediates and functions as a folding molecular chaperone that assists the non-covalent folding of proteins in an ATP-dependent manner. This chain is Heat shock protein 90-6, mitochondrial, found in Arabidopsis thaliana (Mouse-ear cress).